The chain runs to 1116 residues: MAANEKMDVTVKTLDSQTRTFTVEAEILVKEFKAHISSAVGITPEKQRLIYQGRVLQEDKKLNEYNVDGKVIHLVERAPPQTQTSTSGPSTSSSTSPSSSNAAPVPGAPERNGNSYVMVGTFNLPHVMSGLGEASRGPSVSTISGSEPRVRLVLAQNILQDIQRNLDRLEGQPGNEQAAEPMDTAESEGEASSRETLPQTTQNADGQSNSTPTSHPSPSEYVEVLQSLSRVEERLAPFMQRYREILSSATSDTYENQEREQSQRIINLVGESLRLLGNALVAVSDLRCNLSSASPRHLHVVRPMSHYSGPMLLQQAAIPIQINVGTTVSTTGNGTHAGHVPSDGNATPSTNTSEHQRSNSENQPPPSGERPASDAPPNSVPHPHPRVIRITHQTVEPVMMMHMNIQDSASGGPTNIPPPTAGHGGSAHIHMPGLPPEFMQAISNQITQQAMAAASGQQIPGFQAPPRFVFTRPAAPSFNFQPGAAATTPPAPGGATTTAPGATVGPAGNASLAQMISGLVGQLLMHPVVVAQGGSSTSSTTSTSTSTSTSSSTSSSSSTVPTSTTTTTSTSFPNVSSVPSAQLPPGTDQHLSQLLGSLLGTASSGMSNLTMGSPSITVTVPGMPAFLQGVTDILQATQTVPVSTSPPQSASQAPPPPSSPAPPAHSAPPPAAAPESLPPEFFTSVVQGVLSSMLGSLSAADQSGTESIADFIQRLSGSHNIFQPDAEGPGGFFGDLLTLICHNFSLVDMVMLLHGHSQPLQNLQPQLRSFFLQEYLHQADPTPNNIQMASRNLTNGLEEYIRESFASVTVRDDVDITRTNLEFLQDQFNRITTHILHCADSTFGQRLLEMCNQSLFEWLALNLYCLRGDQNALTSVINERIRRLSLDVSPVLVSWVTSVLSLRLQVLLGQMPVTEGEIQRHVRRVGDASQVPEPSSQEQPMETMPVDFQQNGAASPVPATTVEEVLFLPPQSSVPTICPDSEHPTQGDSVSEQWTASVPPEWVPVIRQDLQNQRKIKQQPPLSDAYLSGMPAKRRKTMQGEGPHLSLSEAVSRAMKVTGAKPESSTECVKRELDNSEAQGEYKEQLCQDIQEILQDDESYTAQRFPNTHRAFRGDP.

Residues 7–82 (MDVTVKTLDS…HLVERAPPQT (76 aa)) form the Ubiquitin-like domain. Disordered regions lie at residues 76-114 (ERAP…RNGN), 170-221 (EGQP…PSEY), 329-385 (STTG…HPHP), 473-502 (PAAP…APGA), 533-589 (GGSS…GTDQ), 640-678 (VPVS…ESLP), and 1058-1080 (TGAK…EAQG). Residues 79–100 (PPQTQTSTSGPSTSSSTSPSSS) show a composition bias toward low complexity. Over residues 194–207 (RETLPQTTQNADGQ) the composition is skewed to polar residues. Low complexity predominate over residues 208–219 (SNSTPTSHPSPS). Positions 344 to 353 (GNATPSTNTS) are enriched in polar residues. Low complexity-rich tracts occupy residues 482–502 (PGAA…APGA), 535–580 (SSTS…SVPS), and 641–652 (PVSTSPPQSASQ). Over residues 653–672 (APPPPSSPAPPAHSAPPPAA) the composition is skewed to pro residues. Basic and acidic residues predominate over residues 1068–1080 (CVKRELDNSEAQG).

Component of the bag6/bat3 complex.

The protein localises to the cytoplasm. The protein resides in the cytosol. It localises to the nucleus. It is found in the secreted. Its subcellular location is the extracellular exosome. In terms of biological role, ATP-independent molecular chaperone preventing the aggregation of misfolded and hydrophobic patches-containing proteins. Functions as part of a cytosolic protein quality control complex, the bag6/bat3 complex, which maintains these client proteins in a soluble state and participates in their proper delivery to the endoplasmic reticulum or alternatively can promote their sorting to the proteasome where they undergo degradation. The bag6/bat3 complex is involved in the post-translational delivery of tail-anchored/type II transmembrane proteins to the endoplasmic reticulum membrane. Similarly, the bag6/bat3 complex also functions as a sorting platform for proteins of the secretory pathway that are mislocalized to the cytosol either delivering them to the proteasome for degradation or to the endoplasmic reticulum. The bag6/bat3 complex also plays a role in the endoplasmic reticulum-associated degradation (ERAD), a quality control mechanism that eliminates unwanted proteins of the endoplasmic reticulum through their retrotranslocation to the cytosol and their targeting to the proteasome. It maintains these retrotranslocated proteins in an unfolded yet soluble state condition in the cytosol to ensure their proper delivery to the proteasome. Also required for selective ubiquitin-mediated degradation of defective nascent chain polypeptides by the proteasome. Also involved in endoplasmic reticulum stress-induced pre-emptive quality control, a mechanism that selectively attenuates the translocation of newly synthesized proteins into the endoplasmic reticulum and reroutes them to the cytosol for proteasomal degradation. May ensure the proper degradation of these proteins and thereby protects the endoplasmic reticulum from protein overload upon stress. By stabilizing a large spectrum of proteins, may indirectly affect different biological processes including apoptosis. By controlling the steady-state expression of the IGF1R receptor, indirectly regulates the insulin-like growth factor receptor signaling pathway. Its function is as follows. When nuclear, may also act as a component of some chromatin regulator complex. The sequence is that of Large proline-rich protein bag6-B from Xenopus laevis (African clawed frog).